An 88-amino-acid chain; its full sequence is Apolipoprotein C-I (88 aa).

The first 26 residues, 1–26 (MRLILSLPVLVVVLSMVLEGPAPAQA), serve as a signal peptide directing secretion.

This sequence belongs to the apolipoprotein C1 family. In terms of tissue distribution, expressed in the liver.

Its subcellular location is the secreted. Its function is as follows. Inhibitor of lipoprotein binding to the low density lipoprotein (LDL) receptor, LDL receptor-related protein, and very low density lipoprotein (VLDL) receptor. Associates with high density lipoproteins (HDL) and the triacylglycerol-rich lipoproteins in the plasma and makes up about 10% of the protein of the VLDL and 2% of that of HDL. Appears to interfere directly with fatty acid uptake and is also the major plasma inhibitor of cholesteryl ester transfer protein (CETP). Binds free fatty acids and reduces their intracellular esterification. Modulates the interaction of APOE with beta-migrating VLDL and inhibits binding of beta-VLDL to the LDL receptor-related protein. The protein is Apolipoprotein C-I (APOC1) of Canis lupus familiaris (Dog).